A 908-amino-acid chain; its full sequence is Protein translocase subunit SecA (908 aa).

ATP-binding positions include Q90, 108-112, and D503; that span reads GEGKT. Positions 846 to 864 are enriched in low complexity; that stretch reads AAAAEAPVAPAPQPAAAAP. The interval 846 to 884 is disordered; sequence AAAAEAPVAPAPQPAAAAPQPTPELVGAEAGEPDPAAWG. Zn(2+) is bound by residues C892, C894, C903, and H904.

Belongs to the SecA family. In terms of assembly, monomer and homodimer. Part of the essential Sec protein translocation apparatus which comprises SecA, SecYEG and auxiliary proteins SecDF-YajC and YidC. It depends on Zn(2+) as a cofactor.

It localises to the cell inner membrane. The protein resides in the cytoplasm. The catalysed reaction is ATP + H2O + cellular proteinSide 1 = ADP + phosphate + cellular proteinSide 2.. In terms of biological role, part of the Sec protein translocase complex. Interacts with the SecYEG preprotein conducting channel. Has a central role in coupling the hydrolysis of ATP to the transfer of proteins into and across the cell membrane, serving both as a receptor for the preprotein-SecB complex and as an ATP-driven molecular motor driving the stepwise translocation of polypeptide chains across the membrane. This is Protein translocase subunit SecA from Cereibacter sphaeroides (strain KD131 / KCTC 12085) (Rhodobacter sphaeroides).